The following is a 654-amino-acid chain: Tumor necrosis factor alpha-induced protein 2 (654 aa).

Disordered regions lie at residues 1–38 (MSEA…KKSK) and 50–78 (GKKK…PPPT). A compositionally biased stretch (basic residues) spans 28–38 (KKKKEKKKKSK).

Belongs to the SEC6 family.

Functionally, may play a role as a mediator of inflammation and angiogenesis. In Homo sapiens (Human), this protein is Tumor necrosis factor alpha-induced protein 2 (TNFAIP2).